Reading from the N-terminus, the 63-residue chain is Beta-defensin 5 (63 aa).

An N-terminal signal peptide occupies residues 1–22 (MRIHYLLFSFLLVLLSPLSVFT). Position 23 is a pyrrolidone carboxylic acid (Gln-23). 3 disulfides stabilise this stretch: Cys-31/Cys-59, Cys-38/Cys-52, and Cys-42/Cys-60.

The protein belongs to the beta-defensin family.

Its subcellular location is the secreted. Functionally, has antibacterial activity. This Rattus norvegicus (Rat) protein is Beta-defensin 5 (Defb5).